The following is an 88-amino-acid chain: Antitoxin VapB3 (88 aa).

Antitoxin component of a type II toxin-antitoxin (TA) system. In Mycobacterium tuberculosis (strain CDC 1551 / Oshkosh), this protein is Antitoxin VapB3 (vapB3).